Reading from the N-terminus, the 316-residue chain is Methionyl-tRNA formyltransferase (316 aa).

108–111 (SLLP) provides a ligand contact to (6S)-5,6,7,8-tetrahydrofolate.

Belongs to the Fmt family.

The enzyme catalyses L-methionyl-tRNA(fMet) + (6R)-10-formyltetrahydrofolate = N-formyl-L-methionyl-tRNA(fMet) + (6S)-5,6,7,8-tetrahydrofolate + H(+). Its function is as follows. Attaches a formyl group to the free amino group of methionyl-tRNA(fMet). The formyl group appears to play a dual role in the initiator identity of N-formylmethionyl-tRNA by promoting its recognition by IF2 and preventing the misappropriation of this tRNA by the elongation apparatus. The polypeptide is Methionyl-tRNA formyltransferase (Heliobacterium modesticaldum (strain ATCC 51547 / Ice1)).